Here is a 442-residue protein sequence, read N- to C-terminus: Putative toxin YopC (442 aa).

This sequence in the C-terminal section; belongs to the MbcT/ParT/Res family. In terms of assembly, forms a complex with cognate antitoxin YopB.

May be the toxic component of a type II toxin-antitoxin (TA) system. Neutralized by its cognate antitoxin YopB. The protein is Putative toxin YopC (yopC) of Bacillus subtilis (strain 168).